The following is a 231-amino-acid chain: UPF0758 protein aq_1610 (231 aa).

The region spanning 110 to 231 (SIRNPQEAFE…YFSFREEGVL (122 aa)) is the MPN domain. Residues H180, H182, and D193 each contribute to the Zn(2+) site. A JAMM motif motif is present at residues 180–193 (HNHPQGEPSPSNED).

It belongs to the UPF0758 family.

The sequence is that of UPF0758 protein aq_1610 from Aquifex aeolicus (strain VF5).